The primary structure comprises 496 residues: ATP synthase subunit beta, chloroplastic (496 aa).

170–177 (GGAGVGKT) contributes to the ATP binding site.

This sequence belongs to the ATPase alpha/beta chains family. As to quaternary structure, F-type ATPases have 2 components, CF(1) - the catalytic core - and CF(0) - the membrane proton channel. CF(1) has five subunits: alpha(3), beta(3), gamma(1), delta(1), epsilon(1). CF(0) has four main subunits: a(1), b(1), b'(1) and c(9-12).

It localises to the plastid. The protein localises to the chloroplast thylakoid membrane. The enzyme catalyses ATP + H2O + 4 H(+)(in) = ADP + phosphate + 5 H(+)(out). Functionally, produces ATP from ADP in the presence of a proton gradient across the membrane. The catalytic sites are hosted primarily by the beta subunits. In Trachycarpus fortunei (Chinese windmill palm), this protein is ATP synthase subunit beta, chloroplastic.